The following is a 538-amino-acid chain: Endoglucanase 16 (538 aa).

The signal sequence occupies residues Met-1–Ala-26. Asp-83 (nucleophile) is an active-site residue. Catalysis depends on residues His-431, Asp-483, and Glu-492. Residues Arg-513–Arg-538 form a disordered region. Residues Ser-516–Pro-530 show a composition bias toward low complexity.

It belongs to the glycosyl hydrolase 9 (cellulase E) family.

Its subcellular location is the secreted. The catalysed reaction is Endohydrolysis of (1-&gt;4)-beta-D-glucosidic linkages in cellulose, lichenin and cereal beta-D-glucans.. This Oryza sativa subsp. japonica (Rice) protein is Endoglucanase 16.